Here is a 127-residue protein sequence, read N- to C-terminus: MMGYFWALMSVLLVSGAQLMMKWAMVSLPPVGQTDALMSAFMSVTPGAVALVIGLFAYVFSMGCWYMALRRIALSKAYPLLSLSYVLVWAAAIGLPWLHEPFSVGKLAGVSVIFVGLLLVCLPDKKS.

Residues 1 to 21 (MMGYFWALMSVLLVSGAQLMM) traverse the membrane as a helical segment. Residues 22–48 (KWAMVSLPPVGQTDALMSAFMSVTPGA) lie on the Periplasmic side of the membrane. Residues 49-69 (VALVIGLFAYVFSMGCWYMAL) traverse the membrane as a helical segment. The Cytoplasmic portion of the chain corresponds to 70–77 (RRIALSKA). Residues 78–98 (YPLLSLSYVLVWAAAIGLPWL) form a helical membrane-spanning segment. At 99 to 101 (HEP) the chain is on the periplasmic side. A helical membrane pass occupies residues 102-122 (FSVGKLAGVSVIFVGLLLVCL). The Cytoplasmic segment spans residues 123–127 (PDKKS).

Belongs to the ArnF family. In terms of assembly, heterodimer of ArnE and ArnF.

It localises to the cell inner membrane. It participates in bacterial outer membrane biogenesis; lipopolysaccharide biosynthesis. Its function is as follows. Translocates 4-amino-4-deoxy-L-arabinose-phosphoundecaprenol (alpha-L-Ara4N-phosphoundecaprenol) from the cytoplasmic to the periplasmic side of the inner membrane. This chain is Probable 4-amino-4-deoxy-L-arabinose-phosphoundecaprenol flippase subunit ArnF, found in Enterobacter sp. (strain 638).